The chain runs to 339 residues: tRNA N6-adenosine threonylcarbamoyltransferase (339 aa).

Residues H111 and H115 each coordinate Fe cation. Substrate is bound by residues 134-138, D167, G180, and N272; that span reads LVSGG. D300 serves as a coordination point for Fe cation.

The protein belongs to the KAE1 / TsaD family. Fe(2+) is required as a cofactor.

It is found in the cytoplasm. The enzyme catalyses L-threonylcarbamoyladenylate + adenosine(37) in tRNA = N(6)-L-threonylcarbamoyladenosine(37) in tRNA + AMP + H(+). Required for the formation of a threonylcarbamoyl group on adenosine at position 37 (t(6)A37) in tRNAs that read codons beginning with adenine. Is involved in the transfer of the threonylcarbamoyl moiety of threonylcarbamoyl-AMP (TC-AMP) to the N6 group of A37, together with TsaE and TsaB. TsaD likely plays a direct catalytic role in this reaction. This is tRNA N6-adenosine threonylcarbamoyltransferase from Vibrio vulnificus (strain YJ016).